A 116-amino-acid polypeptide reads, in one-letter code: Large ribosomal subunit protein uL18 (116 aa).

It belongs to the universal ribosomal protein uL18 family. In terms of assembly, part of the 50S ribosomal subunit; part of the 5S rRNA/L5/L18/L25 subcomplex. Contacts the 5S and 23S rRNAs.

In terms of biological role, this is one of the proteins that bind and probably mediate the attachment of the 5S RNA into the large ribosomal subunit, where it forms part of the central protuberance. This Shewanella sediminis (strain HAW-EB3) protein is Large ribosomal subunit protein uL18.